Consider the following 344-residue polypeptide: Succinylglutamate desuccinylase (344 aa).

3 residues coordinate Zn(2+): His-63, Glu-66, and His-160. Glu-224 is an active-site residue.

Belongs to the AspA/AstE family. Succinylglutamate desuccinylase subfamily. Requires Zn(2+) as cofactor.

The enzyme catalyses N-succinyl-L-glutamate + H2O = L-glutamate + succinate. It participates in amino-acid degradation; L-arginine degradation via AST pathway; L-glutamate and succinate from L-arginine: step 5/5. In terms of biological role, transforms N(2)-succinylglutamate into succinate and glutamate. In Shewanella putrefaciens (strain CN-32 / ATCC BAA-453), this protein is Succinylglutamate desuccinylase.